Reading from the N-terminus, the 252-residue chain is Small ribosomal subunit protein uS3 (252 aa).

A KH type-2 domain is found at 39 to 111; the sequence is IRKLINNFTK…DVNLNVLEVK (73 aa). A disordered region spans residues 222 to 252; it reads KPFASQSSNTPNRRPRNFKGGNNNHVNAKKN. Polar residues predominate over residues 241-252; it reads GGNNNHVNAKKN.

The protein belongs to the universal ribosomal protein uS3 family. In terms of assembly, part of the 30S ribosomal subunit. Forms a tight complex with proteins S10 and S14.

In terms of biological role, binds the lower part of the 30S subunit head. Binds mRNA in the 70S ribosome, positioning it for translation. The chain is Small ribosomal subunit protein uS3 from Onion yellows phytoplasma (strain OY-M).